The primary structure comprises 446 residues: Probable D-serine dehydratase (446 aa).

The residue at position 113 (Lys113) is an N6-(pyridoxal phosphate)lysine.

Belongs to the serine/threonine dehydratase family. DsdA subfamily. Pyridoxal 5'-phosphate serves as cofactor.

The enzyme catalyses D-serine = pyruvate + NH4(+). The chain is Probable D-serine dehydratase from Burkholderia lata (strain ATCC 17760 / DSM 23089 / LMG 22485 / NCIMB 9086 / R18194 / 383).